A 213-amino-acid chain; its full sequence is Dimethyl sulfoxide reductase transcriptional activator (213 aa).

Positions 155–206 (LTAKQREAALIAVHHGYYETPRRTELATLAEALGISKSALSQRLNAVEAKLA) constitute an HTH bat-type domain.

Involved in activating dmsEABCD gene expression related to dimethyl sulfoxide (DMSO) reductase. Required for anaerobic respiration on dimethyl sulfoxide (DMSO). This Haloferax volcanii (strain ATCC 29605 / DSM 3757 / JCM 8879 / NBRC 14742 / NCIMB 2012 / VKM B-1768 / DS2) (Halobacterium volcanii) protein is Dimethyl sulfoxide reductase transcriptional activator.